An 873-amino-acid chain; its full sequence is F-BAR domain only protein 1 (873 aa).

The F-BAR domain occupies 1-248 (MSYFGEHFWG…NVENVTVDML (248 aa)). A mediates membrane-binding region spans residues 1 to 275 (MSYFGEHFWG…LDFDAYSSAA (275 aa)). The segment at 153–172 (RENTSQKEMDKAETKSKKAA) is disordered. The stretch at 155-178 (NTSQKEMDKAETKSKKAADSLRRS) forms a coiled coil. The tract at residues 267–439 (DFDAYSSAAL…KSLFGPPLES (173 aa)) is mediates interaction with the adaptor protein complex AP-2. Residues S295, S343, and S368 each carry the phosphoserine modification. The interval 302–347 (SVDFLESDSGVPPEVDDEGFTVRPDISQNNGAEPPRFSSSDSDFDD) is disordered. Disordered regions lie at residues 381–600 (GSLI…RGPS) and 813–833 (SGHL…SPVA). Over residues 447-466 (TGSSSLGFTSSPSPFSSSSP) the composition is skewed to low complexity. S518 carries the phosphoserine modification. The span at 567-576 (SLSPSPLGSS) shows a compositional bias: low complexity. The segment at 593–873 (HGISRGPSPV…FATGMYLVSC (281 aa)) is mediates interaction with AGFG1, CALM, DAB2, EPS15, EPS15R, ITSN1 and clathrin. Phosphoserine is present on S600. The MHD domain maps to 609–872 (ALPVATAFTE…RFATGMYLVS (264 aa)). Over residues 816–827 (LSASWQPQSGPS) the composition is skewed to polar residues.

Belongs to the FCHO family. In terms of assembly, may oligomerize and form homotetramer. Interacts with AP2A2 and AP2B1; 2 subunits of the adaptor protein complex AP-2. Interacts with DAB2. Interacts with clathrin (CLTC or CLTCL1). Interacts with EPS15, EPS15R and ITSN1. Interacts with AGFG1 and CALM. May interact with ACVR1; linking this receptor to clathrin-mediated endocytosis. In terms of tissue distribution, mainly detected in brain and spleen.

The protein resides in the membrane. It localises to the clathrin-coated pit. Functions in an early step of clathrin-mediated endocytosis. Has both a membrane binding/bending activity and the ability to recruit proteins essential to the formation of functional clathrin-coated pits. May regulate Bmp signaling by regulating clathrin-mediated endocytosis of Bmp receptors. Involved in the regulation of T-cell poliferation and activation. Affects TCR clustering upon receptor triggering and modulates its internalisation, playing a role in TCR-dependent T-cell activation. This is F-BAR domain only protein 1 from Mus musculus (Mouse).